Consider the following 314-residue polypeptide: MNKLKLIFAGTPDFAARHLAALLSSDHEVVAVYTQPDKPAGRGQKLTASPVKELALAHNLPVYQPASLRKEEAQAELAALGADLMVVVAYGLILPKAVLDTPRLGCINVHGSLLPRWRGAAPIQRSIWAGDAETGVTIMQMDVGLDTGAMIRKVSCPIAADETSASLYDKLAGLGPQALVDTVNAMAAGNTAAEAQDDAQANYAEKLSKEEARIDWSMEAVAIERCTRAFNPWPISWFEVAGQTVKVWQAEVVAQDHGQAAGTLLKADKQGIDIATGKGVLRLLTLQPPGKKAMSVTDLLNSRRDWFEPGTQLN.

A (6S)-5,6,7,8-tetrahydrofolate-binding site is contributed by Ser-112 to Pro-115.

The protein belongs to the Fmt family.

It carries out the reaction L-methionyl-tRNA(fMet) + (6R)-10-formyltetrahydrofolate = N-formyl-L-methionyl-tRNA(fMet) + (6S)-5,6,7,8-tetrahydrofolate + H(+). Its function is as follows. Attaches a formyl group to the free amino group of methionyl-tRNA(fMet). The formyl group appears to play a dual role in the initiator identity of N-formylmethionyl-tRNA by promoting its recognition by IF2 and preventing the misappropriation of this tRNA by the elongation apparatus. This Aeromonas hydrophila subsp. hydrophila (strain ATCC 7966 / DSM 30187 / BCRC 13018 / CCUG 14551 / JCM 1027 / KCTC 2358 / NCIMB 9240 / NCTC 8049) protein is Methionyl-tRNA formyltransferase.